A 218-amino-acid chain; its full sequence is Glutathione S-transferase class-mu 26 kDa isozyme (218 aa).

Positions 1 to 83 (MAPKFGYWKV…YIADKHNMLG (83 aa)) constitute a GST N-terminal domain. Residues 7-8 (YW), 41-45 (WSNDK), 54-55 (NL), and 67-68 (QS) each bind glutathione. A GST C-terminal domain is found at 85–203 (CPKERAEISM…NSSRYIKWPL (119 aa)). Y111 lines the substrate pocket.

This sequence belongs to the GST superfamily. Mu family. In terms of assembly, homodimer. As to expression, tegument and in subtegumentary parenchymal cells. GST 26 may be actively excreted by adult worms.

The enzyme catalyses RX + glutathione = an S-substituted glutathione + a halide anion + H(+). Its function is as follows. Conjugation of reduced glutathione to a wide number of exogenous and endogenous hydrophobic electrophiles. GST isoenzymes appear to play a central role in the parasite detoxification system. Other functions are also suspected including a role in increasing the solubility of haematin in the parasite gut. This Schistosoma mansoni (Blood fluke) protein is Glutathione S-transferase class-mu 26 kDa isozyme.